Reading from the N-terminus, the 457-residue chain is Dihydrolipoyllysine-residue acetyltransferase component of pyruvate dehydrogenase complex, mitochondrial (457 aa).

The transit peptide at 1-30 (MLSAALRRRVLAPTHSALRTGFAAHVVRHY) directs the protein to the mitochondrion. Residues 36–112 (HQVIKMPALS…PVGSPIAVLV (77 aa)) enclose the Lipoyl-binding domain. At Lys-77 the chain carries N6-lipoyllysine. The interval 129-168 (AGGDAAKPAAPKKEEKSESKSESASAPEPTPEPQQYQSQG) is disordered. Basic and acidic residues predominate over residues 139-149 (PKKEEKSESKS). At Lys-148 the chain carries N6-crotonyllysine. In terms of domain architecture, Peripheral subunit-binding (PSBD) spans 179–216 (NISASAKRLAREKGISIDGLKGTGKNGQITEEDVKKAI). Catalysis depends on residues His-430 and Asp-434.

It belongs to the 2-oxoacid dehydrogenase family. Eukaryotic pyruvate dehydrogenase (PDH) complexes are organized as a core consisting of the oligomeric dihydrolipoamide acetyl-transferase (E2), around which are arranged multiple copies of pyruvate dehydrogenase (E1), dihydrolipoamide dehydrogenase (E3) and protein X (E3BP) bound by non-covalent bonds. Interacts with SIR5; the interaction is direct. (R)-lipoate serves as cofactor. In terms of processing, decrotonylated at 'Lys-148' by SIR5, which inhibits the activity of the pyruvate dehydrogenase complex (PDC).

It localises to the mitochondrion matrix. The catalysed reaction is N(6)-[(R)-dihydrolipoyl]-L-lysyl-[protein] + acetyl-CoA = N(6)-[(R)-S(8)-acetyldihydrolipoyl]-L-lysyl-[protein] + CoA. In terms of biological role, the pyruvate dehydrogenase complex catalyzes the overall conversion of pyruvate to acetyl-CoA and CO(2). High pyruvate dehydrogenase complex activity is required for sufficient energy production during germination of conidia. In Fusarium oxysporum f. sp. lycopersici (strain 4287 / CBS 123668 / FGSC 9935 / NRRL 34936) (Fusarium vascular wilt of tomato), this protein is Dihydrolipoyllysine-residue acetyltransferase component of pyruvate dehydrogenase complex, mitochondrial.